The primary structure comprises 256 residues: Triosephosphate isomerase (256 aa).

12–14 (NWK) serves as a coordination point for substrate. His-99 acts as the Electrophile in catalysis. Glu-169 (proton acceptor) is an active-site residue. Residues Gly-175, Ser-214, and 235–236 (GG) each bind substrate.

This sequence belongs to the triosephosphate isomerase family. As to quaternary structure, homodimer.

It is found in the cytoplasm. The catalysed reaction is D-glyceraldehyde 3-phosphate = dihydroxyacetone phosphate. It participates in carbohydrate biosynthesis; gluconeogenesis. The protein operates within carbohydrate degradation; glycolysis; D-glyceraldehyde 3-phosphate from glycerone phosphate: step 1/1. In terms of biological role, involved in the gluconeogenesis. Catalyzes stereospecifically the conversion of dihydroxyacetone phosphate (DHAP) to D-glyceraldehyde-3-phosphate (G3P). In Rhizobium meliloti (strain 1021) (Ensifer meliloti), this protein is Triosephosphate isomerase.